The sequence spans 314 residues: Olfactory receptor 14K1 (314 aa).

Topologically, residues 1-23 (MTNQTQMMEFLLVRFTENWVLLR) are extracellular. N-linked (GlcNAc...) asparagine glycosylation is present at Asn3. The helical transmembrane segment at 24–44 (LHALLFSLIYLTAVLMNLVII) threads the bilayer. The Cytoplasmic portion of the chain corresponds to 45-52 (LLMILDHR). Residues 53–73 (LHMAMYFFLRHLSFLDLCLIS) traverse the membrane as a helical segment. Residues 74 to 97 (ATVPKSILNSVASTDSISFLGCVL) are Extracellular-facing. Cys95 and Cys187 are disulfide-bonded. A helical transmembrane segment spans residues 98-118 (QLFLVVLLAGSEIGILTAMSY). The Cytoplasmic segment spans residues 119–131 (DRYAAICCPLHCE). Residues 132-152 (AVMSRGLCVQLMALSWLNRGA) form a helical membrane-spanning segment. Topologically, residues 153–194 (LGLLYTAGTFSLNFYGSDELHQFFCDVPALLKLTCSKEHAII) are extracellular. A helical membrane pass occupies residues 195–215 (SVSVAIGVCYAFSCLVCIVVS). Residues 216–235 (YVYIFSAVLRISQRQRQSKA) lie on the Cytoplasmic side of the membrane. The helical transmembrane segment at 236–256 (FSNCVPHLIVVTVFLVTGAVA) threads the bilayer. Residues 257 to 269 (YLKPGSDAPSILD) lie on the Extracellular side of the membrane. Residues 270–290 (LLVSVFYSVAPPTLNPVIYCL) form a helical membrane-spanning segment. Residues 291–314 (KNKDIKSALSKVLWNVRSSGVMKR) lie on the Cytoplasmic side of the membrane.

This sequence belongs to the G-protein coupled receptor 1 family.

The protein localises to the cell membrane. In terms of biological role, odorant receptor. In Homo sapiens (Human), this protein is Olfactory receptor 14K1 (OR14K1).